The following is a 28-amino-acid chain: Trypsin inhibitor 4 (28 aa).

Intrachain disulfides connect cysteine 2/cysteine 19, cysteine 9/cysteine 21, and cysteine 15/cysteine 27.

It belongs to the protease inhibitor I7 (squash-type serine protease inhibitor) family.

Its subcellular location is the secreted. In terms of biological role, inhibits trypsin. In Luffa aegyptiaca (Sponge gourd), this protein is Trypsin inhibitor 4.